The sequence spans 400 residues: CinA-like protein (400 aa).

It belongs to the CinA family.

In Escherichia coli (strain 55989 / EAEC), this protein is CinA-like protein.